Reading from the N-terminus, the 280-residue chain is Ribosomal RNA small subunit methyltransferase A (280 aa).

6 residues coordinate S-adenosyl-L-methionine: Asn-11, Leu-13, Gly-37, Glu-57, Asp-85, and Asn-106.

This sequence belongs to the class I-like SAM-binding methyltransferase superfamily. rRNA adenine N(6)-methyltransferase family. RsmA subfamily.

It localises to the cytoplasm. It carries out the reaction adenosine(1518)/adenosine(1519) in 16S rRNA + 4 S-adenosyl-L-methionine = N(6)-dimethyladenosine(1518)/N(6)-dimethyladenosine(1519) in 16S rRNA + 4 S-adenosyl-L-homocysteine + 4 H(+). Specifically dimethylates two adjacent adenosines (A1518 and A1519) in the loop of a conserved hairpin near the 3'-end of 16S rRNA in the 30S particle. May play a critical role in biogenesis of 30S subunits. This Campylobacter concisus (strain 13826) protein is Ribosomal RNA small subunit methyltransferase A.